We begin with the raw amino-acid sequence, 708 residues long: Lactotransferrin (708 aa).

The first 19 residues, 1-19 (MKLFVPALLSLGALGLCLA), serve as a signal peptide directing secretion. Transferrin-like domains lie at 25 to 352 (VRWC…NLRE) and 364 to 693 (VVWC…NLKK). Disulfide bonds link Cys28–Cys64 and Cys38–Cys55. Position 79 (Asp79) interacts with Fe(3+). The active site involves Lys92. Tyr111 contributes to the Fe(3+) binding site. Disulfide bonds link Cys134–Cys217, Cys176–Cys192, Cys179–Cys202, Cys189–Cys200, and Cys250–Cys264. Residues Arg140, Ala142, and Gly143 each coordinate hydrogencarbonate. A Fe(3+)-binding site is contributed by Tyr211. A glycan (N-linked (GlcNAc...) (high mannose) asparagine) is linked at Asn252. Residue His272 coordinates Fe(3+). Residue Ser278 is the Nucleophile of the active site. Residue Asn300 is glycosylated (N-linked (GlcNAc...) asparagine). 2 cysteine pairs are disulfide-bonded: Cys367–Cys399 and Cys377–Cys390. A glycan (N-linked (GlcNAc...) (complex) asparagine; alternate) is linked at Asn387. Asn387 carries an N-linked (GlcNAc...) (high mannose) asparagine; alternate glycan. N-linked (GlcNAc...) (hybrid) asparagine; alternate glycosylation occurs at Asn387. Residues Asp414 and Tyr452 each coordinate Fe(3+). Cystine bridges form between Cys424/Cys703, Cys444/Cys666, Cys476/Cys551, Cys500/Cys694, Cys510/Cys524, Cys521/Cys534, Cys592/Cys606, and Cys644/Cys649. Residues Thr478, Arg482, Ala484, and Gly485 each coordinate hydrogencarbonate. Asn495 carries N-linked (GlcNAc...) (complex) asparagine; alternate glycosylation. Asn495 is a glycosylation site (N-linked (GlcNAc...) (high mannose) asparagine; alternate). Asn495 carries N-linked (GlcNAc...) (hybrid) asparagine; alternate glycosylation. Fe(3+) is bound at residue Tyr545. An N-linked (GlcNAc...) (high mannose) asparagine glycan is attached at Asn564. Fe(3+) is bound at residue His614.

This sequence belongs to the transferrin family. As to quaternary structure, monomer. Found in a complex with LTF, CLU, EPPIN and SEMG1. Found in a complex with MPO and LTF; interacts directly with CP, allows Fe(3+) incorporation into LTF and activation of CP ferroxidase activity. Poly-N-acetyllactosaminic carbohydrate moiety seems to be needed for TLR4 activation.

Its subcellular location is the secreted. The protein resides in the cytoplasmic granule. In terms of biological role, transferrins are iron binding transport proteins which can bind two Fe(3+) ions in association with the binding of an anion, usually bicarbonate. Major iron-binding and multifunctional protein found in exocrine fluids such as breast milk and mucosal secretions. Has antimicrobial activity, which depends on the extracellular cation concentration. Antimicrobial properties include bacteriostasis, which is related to its ability to sequester free iron and thus inhibit microbial growth, as well as direct bactericidal properties leading to the release of lipopolysaccharides from the bacterial outer membrane. Can also prevent bacterial biofilm development in P.aeruginosa infection. Has weak antifungal activity against C.albicans. Has anabolic, differentiating and anti-apoptotic effects on osteoblasts and can also inhibit osteoclastogenesis, possibly playing a role in the regulation of bone growth. Promotes binding of species C adenoviruses to epithelial cells, promoting adenovirus infection. Can inhibit papillomavirus infections. Stimulates the TLR4 signaling pathway leading to NF-kappa-B activation and subsequent pro-inflammatory cytokine production while also interfering with the lipopolysaccharide (LPS)-stimulated TLR4 signaling. Inhibits neutrophil granulocyte migration to sites of apoptosis, when secreted by apoptotic cells. Stimulates VEGFA-mediated endothelial cell migration and proliferation. Binds heparin, chondroitin sulfate and possibly other glycosaminoglycans (GAGs). Also binds specifically to pneumococcal surface protein A (PspA), the lipid A portion of bacterial lipopolysaccharide (LPS), lysozyme and DNA. Its function is as follows. Lactoferricin binds to the bacterial surface and is crucial for the bactericidal functions. Has some antiviral activity against papillomavirus infection. N-terminal region shows strong antifungal activity against C.albicans. Contains two BBXB heparin-binding consensus sequences that appear to form the predominate functional GAG-binding site. Functionally, the lactotransferrin transferrin-like domain 1 functions as a serine protease of the peptidase S60 family that cuts arginine rich regions. This function contributes to the antimicrobial activity. Shows a preferential cleavage at -Arg-Ser-Arg-Arg-|- and -Arg-Arg-Ser-Arg-|-, and of Z-Phe-Arg-|-aminomethylcoumarin sites. This is Lactotransferrin (LTF) from Capra hircus (Goat).